A 124-amino-acid chain; its full sequence is Ribonuclease P protein component (124 aa).

This sequence belongs to the RnpA family. Consists of a catalytic RNA component (M1 or rnpB) and a protein subunit.

The catalysed reaction is Endonucleolytic cleavage of RNA, removing 5'-extranucleotides from tRNA precursor.. In terms of biological role, RNaseP catalyzes the removal of the 5'-leader sequence from pre-tRNA to produce the mature 5'-terminus. It can also cleave other RNA substrates such as 4.5S RNA. The protein component plays an auxiliary but essential role in vivo by binding to the 5'-leader sequence and broadening the substrate specificity of the ribozyme. The chain is Ribonuclease P protein component from Synechocystis sp. (strain ATCC 27184 / PCC 6803 / Kazusa).